The chain runs to 211 residues: Thiamine-phosphate synthase (211 aa).

4-amino-2-methyl-5-(diphosphooxymethyl)pyrimidine-binding positions include Gln-36 to Lys-40 and Asn-68. Residues Asp-69 and Asp-88 each contribute to the Mg(2+) site. Residue Ser-107 participates in 4-amino-2-methyl-5-(diphosphooxymethyl)pyrimidine binding. Thr-133–Ser-135 contacts 2-[(2R,5Z)-2-carboxy-4-methylthiazol-5(2H)-ylidene]ethyl phosphate. Lys-136 contacts 4-amino-2-methyl-5-(diphosphooxymethyl)pyrimidine. 2-[(2R,5Z)-2-carboxy-4-methylthiazol-5(2H)-ylidene]ethyl phosphate-binding positions include Gly-164 and Ile-184–Ser-185.

This sequence belongs to the thiamine-phosphate synthase family. Requires Mg(2+) as cofactor.

It catalyses the reaction 2-[(2R,5Z)-2-carboxy-4-methylthiazol-5(2H)-ylidene]ethyl phosphate + 4-amino-2-methyl-5-(diphosphooxymethyl)pyrimidine + 2 H(+) = thiamine phosphate + CO2 + diphosphate. It carries out the reaction 2-(2-carboxy-4-methylthiazol-5-yl)ethyl phosphate + 4-amino-2-methyl-5-(diphosphooxymethyl)pyrimidine + 2 H(+) = thiamine phosphate + CO2 + diphosphate. The catalysed reaction is 4-methyl-5-(2-phosphooxyethyl)-thiazole + 4-amino-2-methyl-5-(diphosphooxymethyl)pyrimidine + H(+) = thiamine phosphate + diphosphate. Its pathway is cofactor biosynthesis; thiamine diphosphate biosynthesis; thiamine phosphate from 4-amino-2-methyl-5-diphosphomethylpyrimidine and 4-methyl-5-(2-phosphoethyl)-thiazole: step 1/1. Condenses 4-methyl-5-(beta-hydroxyethyl)thiazole monophosphate (THZ-P) and 2-methyl-4-amino-5-hydroxymethyl pyrimidine pyrophosphate (HMP-PP) to form thiamine monophosphate (TMP). The protein is Thiamine-phosphate synthase of Halalkalibacterium halodurans (strain ATCC BAA-125 / DSM 18197 / FERM 7344 / JCM 9153 / C-125) (Bacillus halodurans).